Consider the following 457-residue polypeptide: UDP-N-acetylmuramate--L-alanine ligase (457 aa).

109–115 (GTDGKTT) is an ATP binding site.

It belongs to the MurCDEF family.

The protein localises to the cytoplasm. The enzyme catalyses UDP-N-acetyl-alpha-D-muramate + L-alanine + ATP = UDP-N-acetyl-alpha-D-muramoyl-L-alanine + ADP + phosphate + H(+). Its pathway is cell wall biogenesis; peptidoglycan biosynthesis. Its function is as follows. Cell wall formation. This Thermotoga petrophila (strain ATCC BAA-488 / DSM 13995 / JCM 10881 / RKU-1) protein is UDP-N-acetylmuramate--L-alanine ligase.